A 1264-amino-acid polypeptide reads, in one-letter code: Box A-binding factor (1264 aa).

A compositionally biased stretch (basic and acidic residues) spans 1-11 (MTKTTKPKEKA). Disordered regions lie at residues 1–25 (MTKT…SGLG), 161–200 (TASD…ESVK), 234–253 (LISH…QHQQ), 405–463 (QLHQ…HALS), 523–585 (NQTQ…SAAT), and 599–627 (HNSS…PAFQ). Over residues 16–25 (AVIGSGSGLG) the composition is skewed to gly residues. The segment covering 161-171 (TASDTAATSEA) has biased composition (low complexity). Residues 189 to 198 (SKAQNDASES) show a composition bias toward polar residues. Over residues 409-421 (QQHHHQQQLHHHQ) the composition is skewed to basic residues. Low complexity-rich tracts occupy residues 422–438 (QQQQ…QQQQ), 447–459 (STSS…PSSS), and 523–554 (NQTQ…QQQQ). Basic residues predominate over residues 555-564 (QHHHNQHQHH). Composition is skewed to low complexity over residues 565 to 585 (NSSS…SAAT) and 599 to 614 (HNSS…RSSH). The GATA-type zinc finger occupies 803–827 (CSNCHTTHTSLWRRNPAGEPVCNAC). 3 disordered regions span residues 841–867 (TMKK…SKSK), 899–1048 (DDMK…SNEN), and 1181–1202 (EEMD…QHGE). Composition is skewed to low complexity over residues 909–950 (PYNS…GSTS) and 985–1007 (QMSP…HSPS). Positions 1008–1023 (TPTSIFNTPSPTHQLH) are enriched in polar residues. Low complexity-rich tracts occupy residues 1024 to 1048 (NNNN…SNEN) and 1185 to 1200 (QSQQ…QQQH). Residues serine 1208 and serine 1210 each carry the phosphoserine modification.

Interacts (via GATA-type Zn-finger domain) with Bfc; this interaction enhances srp binding to the promoter of crq/croquemort.

It is found in the nucleus. Its function is as follows. May function as a transcriptional activator protein and may play a key role in the organogenesis of the fat body. Binds a sequence element (5'-[TA]GATAA-3') found in the larval promoters of all known alcohol dehydrogenase (ADH) genes. Acts as a homeotic gene downstream of the terminal gap gene HKB to promote morphogenesis and differentiation of anterior and posterior midgut. Together with transcriptional cofactor Bfc directly binds the promoter of phagocytic receptor crq/croquemort to upregulate its expression and stimulate efferocytosis in response to apoptotic cells, including during embryogenesis. The polypeptide is Box A-binding factor (srp) (Drosophila melanogaster (Fruit fly)).